The primary structure comprises 317 residues: Aspartate carbamoyltransferase catalytic subunit (317 aa).

Carbamoyl phosphate is bound by residues Arg-64 and Thr-65. Lys-92 contacts L-aspartate. Arg-114, His-144, and Gln-147 together coordinate carbamoyl phosphate. L-aspartate is bound by residues Arg-177 and Arg-232. Carbamoyl phosphate contacts are provided by Gly-273 and Pro-274.

It belongs to the aspartate/ornithine carbamoyltransferase superfamily. ATCase family. As to quaternary structure, heterododecamer (2C3:3R2) of six catalytic PyrB chains organized as two trimers (C3), and six regulatory PyrI chains organized as three dimers (R2).

The enzyme catalyses carbamoyl phosphate + L-aspartate = N-carbamoyl-L-aspartate + phosphate + H(+). It participates in pyrimidine metabolism; UMP biosynthesis via de novo pathway; (S)-dihydroorotate from bicarbonate: step 2/3. In terms of biological role, catalyzes the condensation of carbamoyl phosphate and aspartate to form carbamoyl aspartate and inorganic phosphate, the committed step in the de novo pyrimidine nucleotide biosynthesis pathway. This is Aspartate carbamoyltransferase catalytic subunit from Thiobacillus denitrificans (strain ATCC 25259 / T1).